The chain runs to 185 residues: Crossover junction endodeoxyribonuclease RuvC (185 aa).

Active-site residues include Asp-7, Glu-66, and Asp-137. Mg(2+) contacts are provided by Asp-7, Glu-66, and Asp-137.

Belongs to the RuvC family. In terms of assembly, homodimer which binds Holliday junction (HJ) DNA. The HJ becomes 2-fold symmetrical on binding to RuvC with unstacked arms; it has a different conformation from HJ DNA in complex with RuvA. In the full resolvosome a probable DNA-RuvA(4)-RuvB(12)-RuvC(2) complex forms which resolves the HJ. Requires Mg(2+) as cofactor.

It localises to the cytoplasm. It carries out the reaction Endonucleolytic cleavage at a junction such as a reciprocal single-stranded crossover between two homologous DNA duplexes (Holliday junction).. In terms of biological role, the RuvA-RuvB-RuvC complex processes Holliday junction (HJ) DNA during genetic recombination and DNA repair. Endonuclease that resolves HJ intermediates. Cleaves cruciform DNA by making single-stranded nicks across the HJ at symmetrical positions within the homologous arms, yielding a 5'-phosphate and a 3'-hydroxyl group; requires a central core of homology in the junction. The consensus cleavage sequence is 5'-(A/T)TT(C/G)-3'. Cleavage occurs on the 3'-side of the TT dinucleotide at the point of strand exchange. HJ branch migration catalyzed by RuvA-RuvB allows RuvC to scan DNA until it finds its consensus sequence, where it cleaves and resolves the cruciform DNA. The sequence is that of Crossover junction endodeoxyribonuclease RuvC from Anaeromyxobacter dehalogenans (strain 2CP-1 / ATCC BAA-258).